Here is a 377-residue protein sequence, read N- to C-terminus: MIEVVDGQRKLSECKRIVVKIGSSLLTANGQGLDLDAISHWAKQIADLHNAGHEIILVSSGAVAEGMVRMKLASRPTDLPSLQACAAIGQMGLIHTWSSVLENHSIRAAQVLLTHDDLADRRRYLNSCDALQNLIDWRVIPVINENDTVSTDEIRFGDNDTLAAMVAGQVHADLLIILTDQQGMFDSDPRHNPDAKLLSTVRATDDVLFEMAGGGGVLGRGGMVTKVRAARLAAKSGCPTLIASGESDNVLSRVMAGEMLGTLFTTDKDRMTAHQQWLAAHLQTAGRLVIDDGAVEAIKLKHRSLLPVGVKTVEGHFDRGDVVECVDKQGKRVAVGRVNFSSRSAEIIKGLSSDKVYQVLGEARSLEMIHRDHMAIY.

Residue Lys20 coordinates ATP. Substrate is bound by residues Ser60, Asp147, and Asn159. Residue 179 to 180 (TD) coordinates ATP. A PUA domain is found at 285–363 (AGRLVIDDGA…DKVYQVLGEA (79 aa)).

This sequence belongs to the glutamate 5-kinase family.

The protein resides in the cytoplasm. It carries out the reaction L-glutamate + ATP = L-glutamyl 5-phosphate + ADP. Its pathway is amino-acid biosynthesis; L-proline biosynthesis; L-glutamate 5-semialdehyde from L-glutamate: step 1/2. Its function is as follows. Catalyzes the transfer of a phosphate group to glutamate to form L-glutamate 5-phosphate. The polypeptide is Glutamate 5-kinase (Acinetobacter baumannii (strain SDF)).